The following is a 198-amino-acid chain: Nucleoid occlusion factor SlmA (198 aa).

An HTH tetR-type domain is found at 10–70 (NRREEILQSL…SLIEFIEDSL (61 aa)). The segment at residues 33 to 52 (TTAKLAASVGVSEAALYRHF) is a DNA-binding region (H-T-H motif). A coiled-coil region spans residues 117–144 (EQDRLQGRINQLFERIEAQLRQVLREKR).

This sequence belongs to the nucleoid occlusion factor SlmA family. In terms of assembly, homodimer. Interacts with FtsZ.

The protein resides in the cytoplasm. Its subcellular location is the nucleoid. Functionally, required for nucleoid occlusion (NO) phenomenon, which prevents Z-ring formation and cell division over the nucleoid. Acts as a DNA-associated cell division inhibitor that binds simultaneously chromosomal DNA and FtsZ, and disrupts the assembly of FtsZ polymers. SlmA-DNA-binding sequences (SBS) are dispersed on non-Ter regions of the chromosome, preventing FtsZ polymerization at these regions. This chain is Nucleoid occlusion factor SlmA, found in Salmonella typhi.